Consider the following 236-residue polypeptide: UPF0502 protein Bcen2424_5610 (236 aa).

Belongs to the UPF0502 family.

The polypeptide is UPF0502 protein Bcen2424_5610 (Burkholderia cenocepacia (strain HI2424)).